The chain runs to 520 residues: GMP synthase [glutamine-hydrolyzing] (520 aa).

The Glutamine amidotransferase type-1 domain maps to 8–202 (RLLIIDFGSQ…FVRLAGFSGD (195 aa)). Cys86 functions as the Nucleophile in the catalytic mechanism. Residues His177 and Glu179 contribute to the active site. One can recognise a GMPS ATP-PPase domain in the interval 203–395 (WTMGAYREQM…LGLPDSFIGR (193 aa)). 230-236 (SGGVDSS) provides a ligand contact to ATP.

In terms of assembly, homodimer.

The enzyme catalyses XMP + L-glutamine + ATP + H2O = GMP + L-glutamate + AMP + diphosphate + 2 H(+). It participates in purine metabolism; GMP biosynthesis; GMP from XMP (L-Gln route): step 1/1. Its function is as follows. Catalyzes the synthesis of GMP from XMP. The polypeptide is GMP synthase [glutamine-hydrolyzing] (Ruegeria sp. (strain TM1040) (Silicibacter sp.)).